Here is a 207-residue protein sequence, read N- to C-terminus: ATP-dependent Clp protease proteolytic subunit 1 (207 aa).

Ser103 functions as the Nucleophile in the catalytic mechanism. His128 is a catalytic residue.

It belongs to the peptidase S14 family. Fourteen ClpP subunits assemble into 2 heptameric rings which stack back to back to give a disk-like structure with a central cavity, resembling the structure of eukaryotic proteasomes.

The protein localises to the cytoplasm. It catalyses the reaction Hydrolysis of proteins to small peptides in the presence of ATP and magnesium. alpha-casein is the usual test substrate. In the absence of ATP, only oligopeptides shorter than five residues are hydrolyzed (such as succinyl-Leu-Tyr-|-NHMec, and Leu-Tyr-Leu-|-Tyr-Trp, in which cleavage of the -Tyr-|-Leu- and -Tyr-|-Trp bonds also occurs).. Its function is as follows. Cleaves peptides in various proteins in a process that requires ATP hydrolysis. Has a chymotrypsin-like activity. Plays a major role in the degradation of misfolded proteins. The sequence is that of ATP-dependent Clp protease proteolytic subunit 1 from Synechococcus sp. (strain CC9605).